The sequence spans 408 residues: S-adenosylmethionine:tRNA ribosyltransferase-isomerase (408 aa).

The protein belongs to the QueA family. In terms of assembly, monomer.

It localises to the cytoplasm. The enzyme catalyses 7-aminomethyl-7-carbaguanosine(34) in tRNA + S-adenosyl-L-methionine = epoxyqueuosine(34) in tRNA + adenine + L-methionine + 2 H(+). It functions in the pathway tRNA modification; tRNA-queuosine biosynthesis. Transfers and isomerizes the ribose moiety from AdoMet to the 7-aminomethyl group of 7-deazaguanine (preQ1-tRNA) to give epoxyqueuosine (oQ-tRNA). In Trichormus variabilis (strain ATCC 29413 / PCC 7937) (Anabaena variabilis), this protein is S-adenosylmethionine:tRNA ribosyltransferase-isomerase.